The chain runs to 270 residues: Tetracenomycin polyketide synthesis O-methyltransferase TcmP (270 aa).

It participates in antibiotic biosynthesis; tetracenomycin C biosynthesis. Its function is as follows. O-methyltransferase that catalyzes the methylation of the C-9 carboxy group of tetracenomycin E (TCM E) to yield TCM A2. Catalyzes as well the following side reactions: methylation of 8-O-methyl-TCM D3 to 9-carboxymethyl-8-O-methyl-TCM D3; and of TCM B3 to 9-carboxymethyl-TCM B3. The polypeptide is Tetracenomycin polyketide synthesis O-methyltransferase TcmP (tcmP) (Streptomyces glaucescens).